Consider the following 152-residue polypeptide: Transcriptional regulator MraZ (152 aa).

SpoVT-AbrB domains follow at residues 7-54 (INSI…TMDE) and 83-126 (ASEM…SQEA).

It belongs to the MraZ family. In terms of assembly, forms oligomers.

It is found in the cytoplasm. It localises to the nucleoid. In Hydrogenovibrio crunogenus (strain DSM 25203 / XCL-2) (Thiomicrospira crunogena), this protein is Transcriptional regulator MraZ.